Consider the following 692-residue polypeptide: Protein artemis (692 aa).

A Phosphothreonine modification is found at threonine 380. At serine 385 the chain carries Phosphoserine. Disordered stretches follow at residues 504-555 (LENF…DSQS) and 640-664 (STNA…LPKR). Positions 506–520 (NFPSSTVAGGSQSPK) are enriched in polar residues. A compositionally biased stretch (low complexity) spans 530 to 543 (THISSQNSSQSTHI). 2 stretches are compositionally biased toward polar residues: residues 544 to 555 (TEQGSQGWDSQS) and 640 to 650 (STNADSQSSSD). Serine 645 is subject to Phosphoserine; by ATM.

It belongs to the DNA repair metallo-beta-lactamase (DRMBL) family. In terms of assembly, interacts with LIG4; the interaction is direct. Interacts with ATM. Interacts with BRCA1. Interacts with PRKDC. Interacts with TP53BP1. Also exhibits ATM- and phosphorylation-dependent interaction with the MRN complex, composed of MRE11, RAD50, and NBN. In terms of processing, phosphorylation on undefined residues by PRKDC may stimulate endonucleolytic activity on 5' and 3' hairpins and overhangs. PRKDC must remain present, even after phosphorylation, for efficient hairpin opening. Also phosphorylated by ATM in response to ionizing radiation (IR) and by ATR in response to ultraviolet (UV) radiation. In terms of tissue distribution, ubiquitously expressed, with highest levels in the kidney, lung, pancreas and placenta (at the mRNA level). Expression is not increased in thymus or bone marrow, sites of V(D)J recombination.

Its subcellular location is the nucleus. Its function is as follows. Nuclease involved in DNA non-homologous end joining (NHEJ); required for double-strand break repair and V(D)J recombination. Required for V(D)J recombination, the process by which exons encoding the antigen-binding domains of immunoglobulins and T-cell receptor proteins are assembled from individual V, (D), and J gene segments. V(D)J recombination is initiated by the lymphoid specific RAG endonuclease complex, which generates site specific DNA double strand breaks (DSBs). These DSBs present two types of DNA end structures: hairpin sealed coding ends and phosphorylated blunt signal ends. These ends are independently repaired by the non homologous end joining (NHEJ) pathway to form coding and signal joints respectively. This protein exhibits single-strand specific 5'-3' exonuclease activity in isolation and acquires endonucleolytic activity on 5' and 3' hairpins and overhangs when in a complex with PRKDC. The latter activity is required specifically for the resolution of closed hairpins prior to the formation of the coding joint. Also required for the repair of complex DSBs induced by ionizing radiation, which require substantial end-processing prior to religation by NHEJ. The protein is Protein artemis of Homo sapiens (Human).